The following is a 320-amino-acid chain: Ferrochelatase (320 aa).

Positions 194 and 275 each coordinate Fe cation.

This sequence belongs to the ferrochelatase family.

It localises to the cytoplasm. It carries out the reaction heme b + 2 H(+) = protoporphyrin IX + Fe(2+). It participates in porphyrin-containing compound metabolism; protoheme biosynthesis; protoheme from protoporphyrin-IX: step 1/1. Catalyzes the ferrous insertion into protoporphyrin IX. The chain is Ferrochelatase from Pectobacterium atrosepticum (strain SCRI 1043 / ATCC BAA-672) (Erwinia carotovora subsp. atroseptica).